We begin with the raw amino-acid sequence, 491 residues long: MANYFNTLNLRQQLAQLGKCRFMGRDEFADGASYLQGKKVVIVGCGAQGLNQGLNMRDSGLDISYALRKEAIAEKRASWRKATENGFKVGTYEELIPQADLVVNLTPDKQHSDVVRSVQPLMKDGAALGYSHGFNIVEVGEQIRKDITVVMVAPKCPGTEVREEYKRGFGVPTLIAVHPENDPKGEGMAIAKAWAAATGGHRAGVLESSFVAEVKSDLMGEQTILCGMLQAGSLLCFDKLVAEGTDPAYAEKLIQFGWETITEALKQGGITLMMDRLSNPAKLRAYALSEQLKEIMAPLFQKHMDDIISGEFSSGMMADWANDDKKLLTWREETGKTAFETAPQYEGKIGEQEYFDKGVLMIAMVKAGVELAFETMVDSGIIEESAYYESLHELPLIANTIARKRLYEMNVVISDTAEYGNYLFSYACVPLLKEFMTTLQTGDLGKAIAEGAVDNAQLRDVNEAIRSHAIEQVGKKLRGYMTDMKRIAVAG.

One can recognise a KARI N-terminal Rossmann domain in the interval 15-208; it reads AQLGKCRFMG…GGHRAGVLES (194 aa). NADP(+) is bound by residues 45-48, Arg68, Arg76, Ser78, and 108-110; these read CGAQ and DKQ. Residue His132 is part of the active site. Gly158 contacts NADP(+). KARI C-terminal knotted domains are found at residues 209–344 and 345–484; these read SFVA…TAPQ and YEGK…MTDM. Residues Asp217, Glu221, Glu389, and Glu393 each coordinate Mg(2+). Residue Ser414 coordinates substrate.

It belongs to the ketol-acid reductoisomerase family. Mg(2+) serves as cofactor.

The catalysed reaction is (2R)-2,3-dihydroxy-3-methylbutanoate + NADP(+) = (2S)-2-acetolactate + NADPH + H(+). It catalyses the reaction (2R,3R)-2,3-dihydroxy-3-methylpentanoate + NADP(+) = (S)-2-ethyl-2-hydroxy-3-oxobutanoate + NADPH + H(+). The protein operates within amino-acid biosynthesis; L-isoleucine biosynthesis; L-isoleucine from 2-oxobutanoate: step 2/4. It functions in the pathway amino-acid biosynthesis; L-valine biosynthesis; L-valine from pyruvate: step 2/4. Its function is as follows. Involved in the biosynthesis of branched-chain amino acids (BCAA). Catalyzes an alkyl-migration followed by a ketol-acid reduction of (S)-2-acetolactate (S2AL) to yield (R)-2,3-dihydroxy-isovalerate. In the isomerase reaction, S2AL is rearranged via a Mg-dependent methyl migration to produce 3-hydroxy-3-methyl-2-ketobutyrate (HMKB). In the reductase reaction, this 2-ketoacid undergoes a metal-dependent reduction by NADPH to yield (R)-2,3-dihydroxy-isovalerate. In Klebsiella pneumoniae (strain 342), this protein is Ketol-acid reductoisomerase (NADP(+)).